We begin with the raw amino-acid sequence, 281 residues long: 2-dehydro-3-deoxyphosphooctonate aldolase (281 aa).

The protein belongs to the KdsA family.

The protein localises to the cytoplasm. It carries out the reaction D-arabinose 5-phosphate + phosphoenolpyruvate + H2O = 3-deoxy-alpha-D-manno-2-octulosonate-8-phosphate + phosphate. It participates in carbohydrate biosynthesis; 3-deoxy-D-manno-octulosonate biosynthesis; 3-deoxy-D-manno-octulosonate from D-ribulose 5-phosphate: step 2/3. It functions in the pathway bacterial outer membrane biogenesis; lipopolysaccharide biosynthesis. The chain is 2-dehydro-3-deoxyphosphooctonate aldolase from Stutzerimonas stutzeri (strain A1501) (Pseudomonas stutzeri).